The sequence spans 185 residues: Ribosome-recycling factor (185 aa).

This sequence belongs to the RRF family.

It localises to the cytoplasm. Responsible for the release of ribosomes from messenger RNA at the termination of protein biosynthesis. May increase the efficiency of translation by recycling ribosomes from one round of translation to another. This Listeria innocua serovar 6a (strain ATCC BAA-680 / CLIP 11262) protein is Ribosome-recycling factor.